The chain runs to 415 residues: Multifunctional CCA protein (415 aa).

ATP-binding residues include Gly8 and Arg11. CTP contacts are provided by Gly8 and Arg11. The Mg(2+) site is built by Glu21 and Asp23. Residues Arg91, Arg137, and Arg140 each contribute to the ATP site. Residues Arg91, Arg137, and Arg140 each contribute to the CTP site. One can recognise an HD domain in the interval 226–327 (TGIHTLMTVS…IKLFSAIDVW (102 aa)).

Belongs to the tRNA nucleotidyltransferase/poly(A) polymerase family. Bacterial CCA-adding enzyme type 1 subfamily. As to quaternary structure, monomer. Can also form homodimers and oligomers. Requires Mg(2+) as cofactor. Ni(2+) is required as a cofactor.

The enzyme catalyses a tRNA precursor + 2 CTP + ATP = a tRNA with a 3' CCA end + 3 diphosphate. It carries out the reaction a tRNA with a 3' CCA end + 2 CTP + ATP = a tRNA with a 3' CCACCA end + 3 diphosphate. In terms of biological role, catalyzes the addition and repair of the essential 3'-terminal CCA sequence in tRNAs without using a nucleic acid template. Adds these three nucleotides in the order of C, C, and A to the tRNA nucleotide-73, using CTP and ATP as substrates and producing inorganic pyrophosphate. tRNA 3'-terminal CCA addition is required both for tRNA processing and repair. Also involved in tRNA surveillance by mediating tandem CCA addition to generate a CCACCA at the 3' terminus of unstable tRNAs. While stable tRNAs receive only 3'-terminal CCA, unstable tRNAs are marked with CCACCA and rapidly degraded. The sequence is that of Multifunctional CCA protein from Sodalis glossinidius (strain morsitans).